Here is a 172-residue protein sequence, read N- to C-terminus: Keratin-associated protein 13-1 (172 aa).

5 tandem repeats follow at residues C46 to G55, C56 to S65, C66 to P75, C76 to T85, and C92 to G101. The tract at residues C46–G101 is 5 X 10 AA approximate repeats.

Belongs to the PMG family. As to quaternary structure, interacts with hair keratins. Weak expression seen in the late matrix and entire cortex area of the hair follicle.

In terms of biological role, in the hair cortex, hair keratin intermediate filaments are embedded in an interfilamentous matrix, consisting of hair keratin-associated proteins (KRTAP), which are essential for the formation of a rigid and resistant hair shaft through their extensive disulfide bond cross-linking with abundant cysteine residues of hair keratins. The matrix proteins include the high-sulfur and high-glycine-tyrosine keratins. The chain is Keratin-associated protein 13-1 (KRTAP13-1) from Homo sapiens (Human).